Here is a 634-residue protein sequence, read N- to C-terminus: Polyadenylate-binding protein 1A (634 aa).

4 consecutive RRM domains span residues 11-89 (ASLY…WSQR), 99-175 (GNIF…RFKS), 191-268 (TNVY…RAQK), and 294-370 (VNLY…LAQR). Residues 541-618 (QEPLTASMLA…AVAVLQAHQA (78 aa)) form the PABC domain.

Belongs to the polyadenylate-binding protein type-1 family. Interacts with ybx1; interaction recruits pabpc1a on C5-methylcytosine (m5C)-containing mRNAs, preventing their degradation.

It localises to the cytoplasm. In terms of biological role, binds the poly(A) tail of mRNA. Prevents mRNA deadenylation and confers poly(A) stability. Binds to N6-methyladenosine (m6A)-containing mRNAs. Stimulates the translation of mRNAs to which it is bound, acting, at least in part, with dazl. Involved in the maternal-to-zygotic transition in early embryo via interaction with ybx1: interaction recruits pabpc1a on C5-methylcytosine (m5C)-containing maternal mRNAs, preventing their degradation. The polypeptide is Polyadenylate-binding protein 1A (Danio rerio (Zebrafish)).